The sequence spans 119 residues: Large ribosomal subunit protein bL20c (119 aa).

It belongs to the bacterial ribosomal protein bL20 family.

It localises to the plastid. The protein localises to the chloroplast. In terms of biological role, binds directly to 23S ribosomal RNA and is necessary for the in vitro assembly process of the 50S ribosomal subunit. It is not involved in the protein synthesizing functions of that subunit. In Triticum aestivum (Wheat), this protein is Large ribosomal subunit protein bL20c.